Reading from the N-terminus, the 362-residue chain is Formate dehydrogenase (362 aa).

V93 and N119 together coordinate substrate. NAD(+)-binding positions include 174–175 (RI), D195, 230–234 (PLHAG), T256, D282, 311–314 (HYSG), and S357.

It belongs to the D-isomer specific 2-hydroxyacid dehydrogenase family. FDH subfamily. Homodimer.

It localises to the cytoplasm. It catalyses the reaction formate + NAD(+) = CO2 + NADH. Functionally, catalyzes the NAD(+)-dependent oxidation of formate to carbon dioxide. Formate oxidation is the final step in the methanol oxidation pathway in methylotrophic microorganisms. Has a role in the detoxification of exogenous formate in non-methylotrophic organisms. The chain is Formate dehydrogenase from Pichia angusta (Yeast).